The sequence spans 266 residues: 4-hydroxy-tetrahydrodipicolinate reductase (266 aa).

10-15 lines the NAD(+) pocket; sequence GPRGRM. Position 38 (K38) interacts with NADP(+). Residues 99–101 and 125–128 each bind NAD(+); these read GTT and APNF. H155 acts as the Proton donor/acceptor in catalysis. A (S)-2,3,4,5-tetrahydrodipicolinate-binding site is contributed by H156. K159 acts as the Proton donor in catalysis. A (S)-2,3,4,5-tetrahydrodipicolinate-binding site is contributed by 165–166; it reads GT.

This sequence belongs to the DapB family.

The protein localises to the cytoplasm. It catalyses the reaction (S)-2,3,4,5-tetrahydrodipicolinate + NAD(+) + H2O = (2S,4S)-4-hydroxy-2,3,4,5-tetrahydrodipicolinate + NADH + H(+). The catalysed reaction is (S)-2,3,4,5-tetrahydrodipicolinate + NADP(+) + H2O = (2S,4S)-4-hydroxy-2,3,4,5-tetrahydrodipicolinate + NADPH + H(+). The protein operates within amino-acid biosynthesis; L-lysine biosynthesis via DAP pathway; (S)-tetrahydrodipicolinate from L-aspartate: step 4/4. Its function is as follows. Catalyzes the conversion of 4-hydroxy-tetrahydrodipicolinate (HTPA) to tetrahydrodipicolinate. In Bacillus anthracis (strain A0248), this protein is 4-hydroxy-tetrahydrodipicolinate reductase.